A 72-amino-acid polypeptide reads, in one-letter code: Nod factor export ATP-binding protein I (72 aa).

This sequence belongs to the ABC transporter superfamily. Lipooligosaccharide exporter (TC 3.A.1.102) family. The complex is composed of two ATP-binding proteins (NodI) and two transmembrane proteins (NodJ).

It is found in the cell inner membrane. Its function is as follows. Part of the ABC transporter complex NodIJ involved in the export of the nodulation factors (Nod factors), the bacterial signal molecules that induce symbiosis and subsequent nodulation induction. Nod factors are LCO (lipo-chitin oligosaccharide), a modified beta-1,4-linked N-acetylglucosamine oligosaccharide. This subunit is responsible for energy coupling to the transport system. This chain is Nod factor export ATP-binding protein I, found in Rhizobium leguminosarum bv. trifolii.